The sequence spans 199 residues: Alkyl hydroperoxide reductase C (199 aa).

The 162-residue stretch at 2-163 folds into the Thioredoxin domain; sequence VLVTYPAPDF…TLRMIDALHF (162 aa). Cys-50 (cysteine sulfenic acid (-SOH) intermediate) is an active-site residue.

This sequence belongs to the peroxiredoxin family. AhpC/Prx1 subfamily. In terms of assembly, homodimer; disulfide-linked, upon oxidation. 5 homodimers assemble to form a ring-like decamer.

The protein localises to the cytoplasm. It catalyses the reaction a hydroperoxide + NADH + H(+) = an alcohol + NAD(+) + H2O. Thiol-specific peroxidase that catalyzes the reduction of hydrogen peroxide and organic hydroperoxides to water and alcohols, respectively. Plays a role in cell protection against oxidative stress by detoxifying peroxides. The polypeptide is Alkyl hydroperoxide reductase C (Buchnera aphidicola subsp. Baizongia pistaciae (strain Bp)).